Reading from the N-terminus, the 904-residue chain is Toll-like receptor 3 (904 aa).

Positions 1 to 23 (MRQTLPCIYFWGGLLPFGMLCAS) are cleaved as a signal peptide. The LRRNT domain occupies 24–51 (STTKCTVSHEVADCSHLKLTQVPDDLPT). At 24 to 704 (STTKCTVSHE…SCKDSAPFEL (681 aa)) the chain is on the lumenal side. A disulfide bridge connects residues Cys28 and Cys37. N-linked (GlcNAc...) asparagine glycosylation is found at Asn52, Asn57, and Asn70. LRR repeat units lie at residues 52–73 (NITVLNLTHNQLRRLPAANFTR), 76–97 (QLTSLDVGFNTISKLEPELCQK), 100–121 (MLKVLNLQHNELSQLSDKTFAF), 124–145 (NLTELHLMSNSIQKIKNNPFVK), 148–168 (NLITLDLSHNGLSSTKLGTQV), and 172–193 (NLQELLLSNNKIQALKSEELDI). Cysteines 95 and 122 form a disulfide. N-linked (GlcNAc...) asparagine glycosylation occurs at Asn124. Asn196 carries N-linked (GlcNAc...) asparagine glycosylation. LRR repeat units lie at residues 198 to 219 (SLKKLELSSNQIKEFSPGCFHA) and 222 to 244 (RLFGLFLNNVQLGPSLTEKLCLE). Residues Asn247, Asn252, Asn265, Asn275, and Asn291 are each glycosylated (N-linked (GlcNAc...) asparagine). LRR repeat units follow at residues 249 to 270 (SIRNLSLSNSQLSTTSNTTFLG), 275 to 296 (NLTMLDLSYNNLNVVGNDSFAW), 299 to 320 (QLEYFFLEYNNIQHLFSHSLHG), 323 to 344 (NVRYLNLKRSFTKQSISLASLP), 356 to 377 (CLEHLNMEDNDIPGIKSNMFTG), 380 to 400 (NLKYLSLSNSFTSLRTLTNET), 408 to 429 (PLHILNLTKNKISKIESDAFSW), 432 to 454 (HLEVLDLGLNEIGQELTGQEWRG), 465 to 486 (YNKYLQLTRNSFALVPSLQRLM), 507 to 528 (NLTILDLSNNNIANINDDMLEG), 531 to 552 (KLEILDLQHNNLARLWKHANPG), 563 to 584 (HLHILNLESNGFDEIPVEVFKD), 587 to 608 (ELKIIDLGLNNLNTLPASVFNN), and 611 to 632 (SLKSLNLQKNLITSVEKKVFGP). Asn398 and Asn413 each carry an N-linked (GlcNAc...) asparagine glycan. N-linked (GlcNAc...) asparagine glycosylation is present at Asn507. N-linked (GlcNAc...) asparagine glycans are attached at residues Asn636 and Asn662. The region spanning 645 to 698 (NPFDCTCESIAWFVNWINETHTNIPELSSHYLCNTPPHYHGFPVRLFDTSSCKD) is the LRRCT domain. 2 disulfide bridges follow: Cys649/Cys677 and Cys651/Cys696. The chain crosses the membrane as a helical span at residues 705–725 (FFMINTSILLIFIFIVLLIHF). Residues 726–904 (EGWRISFYWN…VALGSKNSVH (179 aa)) lie on the Cytoplasmic side of the membrane. The region spanning 754 to 897 (FEYAAYIIHA…AFRHKLQVAL (144 aa)) is the TIR domain. At Tyr759 the chain carries Phosphotyrosine. Residues Lys765, Lys812, and Lys831 each participate in a glycyl lysine isopeptide (Lys-Gly) (interchain with G-Cter in ubiquitin) cross-link. Tyr858 carries the post-translational modification Phosphotyrosine.

The protein belongs to the Toll-like receptor family. In terms of assembly, monomer and homodimer; dimerization is triggered by ligand-binding, the signaling unit is composed of one ds-RNA of around 40 bp and two TLR3 molecules, and lateral clustering of signaling units along the length of the ds-RNA ligand is required for TLR3 signal transduction. Interacts (via transmembrane domain) with UNC93B1; the interaction is required for transport from the ER to the endosomes. Interacts with SRC; upon binding of double-stranded RNA. Interacts with TICAM1 (via the TIR domain) in response to poly(I:C) and this interaction is enhanced in the presence of WDFY1. The tyrosine-phosphorylated form (via TIR domain) interacts with WDFY1 (via WD repeat 2) in response to poly(I:C). Post-translationally, heavily N-glycosylated, except on that part of the surface of the ectodomain that is involved in ligand binding. In terms of processing, TLR3 signaling requires a proteolytic cleavage mediated by cathepsins CTSB and CTSH, the cleavage occurs between amino acids 252 and 346. The cleaved form of TLR3 is the predominant form found in endosomes. Ubiquitinated by TRIM3; leading to recognition and sorting of polyubiquitinated TLR3 by the ESCRT complexes. Ubiquitinated by ZNRF1 via 'Lys-63'-linked ubiquitin chains; leading to TLR3 lysosomal trafficking and degradation. Ubiquitinated by RNF170 at Lys-765 via 'Lys-48'-linked ubiquitin chains; leading to TLR3 proteasomal degradation. As to expression, expressed at high level in placenta and pancreas. Also detected in CD11c+ immature dendritic cells. Only expressed in dendritic cells and not in other leukocytes, including monocyte precursors. TLR3 is the TLR that is expressed most strongly in the brain, especially in astrocytes, glia, and neurons.

The protein localises to the endoplasmic reticulum membrane. Its subcellular location is the endosome membrane. The protein resides in the early endosome. Key component of innate and adaptive immunity. TLRs (Toll-like receptors) control host immune response against pathogens through recognition of molecular patterns specific to microorganisms. TLR3 is a nucleotide-sensing TLR which is activated by double-stranded RNA, a sign of viral infection. Acts via the adapter TRIF/TICAM1, leading to NF-kappa-B activation, IRF3 nuclear translocation, cytokine secretion and the inflammatory response. This Homo sapiens (Human) protein is Toll-like receptor 3.